The sequence spans 308 residues: Bifunctional protein FolD (308 aa).

Residues 171 to 173 (GRS), Ser-198, and Ile-239 contribute to the NADP(+) site.

The protein belongs to the tetrahydrofolate dehydrogenase/cyclohydrolase family. In terms of assembly, homodimer.

It carries out the reaction (6R)-5,10-methylene-5,6,7,8-tetrahydrofolate + NADP(+) = (6R)-5,10-methenyltetrahydrofolate + NADPH. The enzyme catalyses (6R)-5,10-methenyltetrahydrofolate + H2O = (6R)-10-formyltetrahydrofolate + H(+). Its pathway is one-carbon metabolism; tetrahydrofolate interconversion. Catalyzes the oxidation of 5,10-methylenetetrahydrofolate to 5,10-methenyltetrahydrofolate and then the hydrolysis of 5,10-methenyltetrahydrofolate to 10-formyltetrahydrofolate. In Borreliella burgdorferi (strain ZS7) (Borrelia burgdorferi), this protein is Bifunctional protein FolD.